Here is a 335-residue protein sequence, read N- to C-terminus: Probable magnesium transporter NIPA1 (335 aa).

At 1–7 the chain is on the extracellular side; it reads MDQMSPD. A helical transmembrane segment spans residues 8 to 28; sequence NINGVILAVSSSIFIGSSFII. The Cytoplasmic segment spans residues 29–55; it reads KKKGLKKAGASGVRAGEGGYGYLKEPW. A helical transmembrane segment spans residues 56–76; it reads WWAGMITMIVGEVANFAAYAF. Over 77 to 79 the chain is Extracellular; it reads APA. A helical transmembrane segment spans residues 80 to 100; the sequence is ILVTPLGALSIIFSAVLAHFI. The Cytoplasmic segment spans residues 101–104; the sequence is LKEK. The chain crosses the membrane as a helical span at residues 105 to 125; it reads LHMFGILGCILCVVGSTTIVL. Residues 126-143 are Extracellular-facing; sequence HAPHEQKIESVKQIWQLA. A helical transmembrane segment spans residues 144–164; sequence IEPGFLVYSAVIVIVVAILIF. The Cytoplasmic portion of the chain corresponds to 165 to 179; the sequence is YYEPRYGKTHMIVYV. A helical membrane pass occupies residues 180–200; it reads GICSLMGSLTVMSVKAVAIAI. Residues 201–212 are Extracellular-facing; that stretch reads KLTFSGTNQFKY. The chain crosses the membrane as a helical span at residues 213 to 233; that stretch reads FNTWIFILVVATCCILQINYL. Residues 234 to 244 lie on the Cytoplasmic side of the membrane; sequence NKALDTFNTAV. Residues 245-265 traverse the membrane as a helical segment; sequence ISPVYYVMFTTFTIIASMIMF. The Extracellular segment spans residues 266-272; it reads KDWASQS. A helical transmembrane segment spans residues 273–293; the sequence is GLKIATELCGFVTILSGTFLL. At 294–335 the chain is on the cytoplasmic side; that stretch reads HKTKDMGNSASGRGSISMPTRDTPVFTNSGSGRSSSSDKVAS. Positions 303-321 are enriched in polar residues; that stretch reads ASGRGSISMPTRDTPVFTN. The segment at 303 to 335 is disordered; that stretch reads ASGRGSISMPTRDTPVFTNSGSGRSSSSDKVAS. A compositionally biased stretch (low complexity) spans 322 to 335; that stretch reads SGSGRSSSSDKVAS.

The protein belongs to the NIPA (TC 2.A.7) family. In terms of assembly, homodimer.

It is found in the cell membrane. The protein resides in the early endosome. Acts as a Mg(2+) transporter. Can also transport other divalent cations such as Fe(2+), Sr(2+), Ba(2+), Mn(2+) and Co(2+) but to a much less extent than Mg(2+). This is Probable magnesium transporter NIPA1 from Arabidopsis thaliana (Mouse-ear cress).